The sequence spans 585 residues: Serine/threonine-protein kinase PknI (585 aa).

The Cytoplasmic segment spans residues 1–349; the sequence is MALASGVTFA…ASPTRRRPRR (349 aa). In terms of domain architecture, Protein kinase spans 12 to 252; it reads YTVVRMLGCS…SCREFADAMN (241 aa). ATP is bound by residues 18-26 and K41; that span reads LGCSAMGEV. 3 residues coordinate ADP: K41, D90, and V92. D137 acts as the Proton acceptor in catalysis. Residues 350-370 form a helical membrane-spanning segment; that stretch reads ILVGAVAVLLLAGLFAVGIVI. Residues 371-585 are Extracellular-facing; that stretch reads GRKTNTTATE…PTTTAPGPGR (215 aa). Positions 546–585 are disordered; it reads SGDLPPAVTVPDPATIPDTPDTTSTATLTPPTTTAPGPGR. Residues 554–585 show a composition bias toward low complexity; the sequence is TVPDPATIPDTPDTTSTATLTPPTTTAPGPGR.

It belongs to the protein kinase superfamily. Ser/Thr protein kinase family. The cofactor is Mn(2+). Post-translationally, autophosphorylated at serine and threonine residues.

The protein resides in the cytoplasm. Its subcellular location is the cell membrane. The enzyme catalyses L-seryl-[protein] + ATP = O-phospho-L-seryl-[protein] + ADP + H(+). It catalyses the reaction L-threonyl-[protein] + ATP = O-phospho-L-threonyl-[protein] + ADP + H(+). Functionally, plays an important role in slowing down the growth of mycobacteria within the infected host. This Mycobacterium bovis (strain ATCC BAA-935 / AF2122/97) protein is Serine/threonine-protein kinase PknI (pknI).